A 465-amino-acid chain; its full sequence is Siroheme synthase (465 aa).

A precorrin-2 dehydrogenase /sirohydrochlorin ferrochelatase region spans residues 1–203 (MDFLPLFHSL…GRPAEAERLL (203 aa)). NAD(+)-binding positions include 22 to 23 (EV) and 43 to 44 (PQ). At S128 the chain carries Phosphoserine. The tract at residues 217-465 (GEVYLVGAGP…AWFEGAREDA (249 aa)) is uroporphyrinogen-III C-methyltransferase. P226 serves as a coordination point for S-adenosyl-L-methionine. The active-site Proton acceptor is D249. Catalysis depends on K271, which acts as the Proton donor. S-adenosyl-L-methionine is bound by residues 302-304 (GGD), I307, 332-333 (TA), M384, and G413.

It in the N-terminal section; belongs to the precorrin-2 dehydrogenase / sirohydrochlorin ferrochelatase family. In the C-terminal section; belongs to the precorrin methyltransferase family.

The catalysed reaction is uroporphyrinogen III + 2 S-adenosyl-L-methionine = precorrin-2 + 2 S-adenosyl-L-homocysteine + H(+). It carries out the reaction precorrin-2 + NAD(+) = sirohydrochlorin + NADH + 2 H(+). The enzyme catalyses siroheme + 2 H(+) = sirohydrochlorin + Fe(2+). Its pathway is cofactor biosynthesis; adenosylcobalamin biosynthesis; precorrin-2 from uroporphyrinogen III: step 1/1. It participates in cofactor biosynthesis; adenosylcobalamin biosynthesis; sirohydrochlorin from precorrin-2: step 1/1. It functions in the pathway porphyrin-containing compound metabolism; siroheme biosynthesis; precorrin-2 from uroporphyrinogen III: step 1/1. The protein operates within porphyrin-containing compound metabolism; siroheme biosynthesis; siroheme from sirohydrochlorin: step 1/1. Its pathway is porphyrin-containing compound metabolism; siroheme biosynthesis; sirohydrochlorin from precorrin-2: step 1/1. Its function is as follows. Multifunctional enzyme that catalyzes the SAM-dependent methylations of uroporphyrinogen III at position C-2 and C-7 to form precorrin-2 via precorrin-1. Then it catalyzes the NAD-dependent ring dehydrogenation of precorrin-2 to yield sirohydrochlorin. Finally, it catalyzes the ferrochelation of sirohydrochlorin to yield siroheme. The polypeptide is Siroheme synthase (Pseudomonas aeruginosa (strain UCBPP-PA14)).